The primary structure comprises 530 residues: AA9 family lytic polysaccharide monooxygenase C (530 aa).

A signal peptide spans 1-18; the sequence is MQLKSTVHFLSLLAYTAA. Positions 19 and 103 each coordinate Cu(2+). 2 disulfide bridges follow: Cys-72/Cys-190 and Cys-114/Cys-118. N-linked (GlcNAc...) asparagine glycosylation is present at Asn-150. O2 is bound at residue Gln-185. Tyr-187 lines the Cu(2+) pocket. A compositionally biased stretch (low complexity) spans 238–251; that stretch reads YGSGSSSSQNSVES. Disordered regions lie at residues 238–279, 297–329, 348–375, and 492–512; these read YGSG…STSA, ESSS…SSSA, YSSA…KLSS, and GNGA…GTTP. The span at 312 to 324 shows a compositional bias: basic and acidic residues; it reads KSVEAKETTKVEE. Positions 348 to 368 are enriched in low complexity; the sequence is YSSASPSSSPVLSSSKPASTS.

It belongs to the polysaccharide monooxygenase AA9 family. It depends on Cu(2+) as a cofactor.

The protein localises to the secreted. The enzyme catalyses [(1-&gt;4)-beta-D-glucosyl]n+m + reduced acceptor + O2 = 4-dehydro-beta-D-glucosyl-[(1-&gt;4)-beta-D-glucosyl]n-1 + [(1-&gt;4)-beta-D-glucosyl]m + acceptor + H2O.. Lytic polysaccharide monooxygenase (LPMO) that depolymerizes polysaccharides via the oxidation of scissile alpha- or beta-(1-4)-glycosidic bonds, yielding C1 or C4 oxidation products. Catalysis by LPMOs requires the reduction of the active-site copper from Cu(II) to Cu(I) by a reducing agent and H(2)O(2) or O(2) as a cosubstrate. Amorphous cellulose is not a suitable substrate for LPMO9C, which may act at the surface of cellulose microfibrils without any release of soluble products. The chain is AA9 family lytic polysaccharide monooxygenase C from Geotrichum candidum (Oospora lactis).